A 31-amino-acid polypeptide reads, in one-letter code: Monocyclic monoterpene ketone monooxygenase (31 aa).

20–25 (GAGFXG) serves as a coordination point for FAD.

Monomer. The cofactor is FAD.

It catalyses the reaction 1-hydroxylimonen-2-one + NADPH + O2 = 3-isopropenyl-6-oxoheptanoate + NADP(+) + H2O. The enzyme catalyses (1R,4S)-1-hydroxylimonen-2-one + NADPH + O2 + H(+) = (4S,7S)-7-hydroxy-4-isopropenyl-7-methyloxepan-2-one + NADP(+) + H2O. The catalysed reaction is (1S,4R)-1-hydroxylimonen-2-one + NADPH + O2 + H(+) = (4R,7R)-7-hydroxy-4-isopropenyl-7-methyloxepan-2-one + NADP(+) + H2O. It carries out the reaction (1R,4R)-dihydrocarvone + NADPH + O2 + H(+) = (4R,7R)-4-isopropenyl-7-methyloxepan-2-one + NADP(+) + H2O. It catalyses the reaction (1S,4R)-menthone + NADPH + O2 + H(+) = (4S,7R)-7-isopropyl-4-methyloxepan-2-one + NADP(+) + H2O. The enzyme catalyses (1R,4S)-menthone + NADPH + O2 + H(+) = (4R,7S)-7-isopropyl-4-methyloxepan-2-one + NADP(+) + H2O. The catalysed reaction is (1S,4R)-isodihydrocarvone + NADPH + O2 + H(+) = (3S,6R)-6-isopropenyl-3-methyloxepan-2-one + NADP(+) + H2O. It participates in terpene metabolism; monoterpene degradation. Functionally, catalyzes the NADPH- and oxygen-dependent oxidation of the monocyclic monoterpene ketones 1-hydroxy-2-oxolimonene, dihydrocarvone and menthone. Is able to convert all enantiomers of these natural substrates with almost equal efficiency. Is thus involved in the conversion of the monocyclic monoterpene ketone intermediates formed in the degradation pathways of all stereoisomers of three different monocyclic monoterpenes, i.e. limonene, (dihydro)carveol and menthol, which likely make R.erythropolis able to grow on these compounds as the sole source of carbon and energy. In Rhodococcus erythropolis (Arthrobacter picolinophilus), this protein is Monocyclic monoterpene ketone monooxygenase.